Reading from the N-terminus, the 317-residue chain is UV DNA damage endonuclease (317 aa).

Belongs to the uve1/UvsE family.

Its function is as follows. Component in a DNA repair pathway. Removal of UV LIGHT damaged nucleotides. Recognizes pyrimidine dimers and cleave a phosphodiester bond immediately 5' to the lesion. The sequence is that of UV DNA damage endonuclease from Bacillus cereus (strain B4264).